The chain runs to 303 residues: Acetaldehyde dehydrogenase (303 aa).

The active-site Acyl-thioester intermediate is Cys-130. NAD(+)-binding positions include 161–169 (SVGPGTRKN) and Asn-272.

Belongs to the acetaldehyde dehydrogenase family.

It carries out the reaction acetaldehyde + NAD(+) + CoA = acetyl-CoA + NADH + H(+). This Verminephrobacter eiseniae (strain EF01-2) protein is Acetaldehyde dehydrogenase.